We begin with the raw amino-acid sequence, 351 residues long: Protein Wnt-2b-A (351 aa).

Positions 1-16 (MHFAYILILLILTPRV) are cleaved as a signal peptide. Intrachain disulfides connect C67–C78, C118–C126, C128–C148, C197–C211, C199–C206, C269–C300, C285–C295, C299–C339, C315–C330, C317–C327, and C322–C323. N77 is a glycosylation site (N-linked (GlcNAc...) asparagine). S203 is lipidated: O-palmitoleoyl serine; by PORCN.

This sequence belongs to the Wnt family. Post-translationally, palmitoleoylation is required for efficient binding to frizzled receptors. Depalmitoleoylation leads to Wnt signaling pathway inhibition. Expressed maternally in both vegetal and animal blastomeres with enrichment in the animal hemisphere. Expressed zygotically near the prosencephalic-mesencephalic boundary of the developing brain in neurula and tailbud stages, and also in non-brain areas at tadpole stages.

It localises to the secreted. Its subcellular location is the extracellular space. The protein resides in the extracellular matrix. Functionally, ligand for members of the frizzled family of seven transmembrane receptors. Functions in the canonical Wnt/beta-catenin signaling pathway. In Xenopus laevis (African clawed frog), this protein is Protein Wnt-2b-A (wnt2b-a).